The following is a 671-amino-acid chain: Putative ubiquitin thioesterase 232R (671 aa).

Disordered regions lie at residues 36–62, 100–123, 171–203, and 250–319; these read EIID…RRIS, SPKI…PVRQ, NQKP…RPVF, and EPIR…SKRS. The span at 110–123 shows a compositional bias: low complexity; sequence PSPVHSPVRSPVRQ. Residues 182 to 200 are compositionally biased toward pro residues; it reads RRSPSPRRSPSPRRSPSPR. Positions 255 to 271 are enriched in low complexity; sequence SSSSRSSRSTRRSSSTK. Residues 272-319 are compositionally biased toward basic residues; that stretch reads PSRRSSSRSRRSSSRSRRSSSRSRRSSSRSRRSSRRSTSRSRSLSKRS. Residues 392-521 enclose the OTU domain; it reads FRMINVPLDG…NFHYIALEPF (130 aa). Residue Asp-400 is part of the active site. The active-site Nucleophile is Cys-403. His-514 is an active-site residue. Positions 589–625 are disordered; sequence KRSLRPSIPPKISTEHRRTPKLRPSVPRPSSIRQSQP.

The catalysed reaction is Thiol-dependent hydrolysis of ester, thioester, amide, peptide and isopeptide bonds formed by the C-terminal Gly of ubiquitin (a 76-residue protein attached to proteins as an intracellular targeting signal).. Functionally, hydrolase that can remove conjugated ubiquitin from proteins and may therefore play an important regulatory role at the level of protein turnover by preventing degradation. This is Putative ubiquitin thioesterase 232R from Acheta domesticus (House cricket).